Here is a 615-residue protein sequence, read N- to C-terminus: DNA mismatch repair protein MutL (615 aa).

The segment at 362 to 397 (HFAEPAVREPVAPRYTPAPASGSRPAAPWPNAQPGY) is disordered. Low complexity predominate over residues 378 to 391 (PAPASGSRPAAPWP).

Belongs to the DNA mismatch repair MutL/HexB family.

Its function is as follows. This protein is involved in the repair of mismatches in DNA. It is required for dam-dependent methyl-directed DNA mismatch repair. May act as a 'molecular matchmaker', a protein that promotes the formation of a stable complex between two or more DNA-binding proteins in an ATP-dependent manner without itself being part of a final effector complex. This Escherichia coli O17:K52:H18 (strain UMN026 / ExPEC) protein is DNA mismatch repair protein MutL.